Here is a 2344-residue protein sequence, read N- to C-terminus: Mucin-4 (2344 aa).

A signal peptide spans 1–30 (MRGPHGVSWRVPWLCLSCLCSCLLLLPVNT). A compositionally biased stretch (low complexity) spans 32-46 (TTSAPKTSTALPSST). 5 disordered regions span residues 32-760 (TTSA…QGSI), 773-1036 (QKMS…TTST), 1072-1130 (VPSL…TPSV), 1171-1197 (STVA…MGAS), and 1233-1269 (SGLT…TVPP). Residues 47 to 100 (NPSQMTSQVSNPTASSYRMTKNTGQASPMVTSSSITTLPQSQHTGSMKTTRNPQ) show a composition bias toward polar residues. Residues 81 to 1006 (ITTLPQSQHT…VSTLVTSTQE (926 aa)) are variable number of tandem repeats (VNTR). Composition is skewed to low complexity over residues 101–116 (TTGT…ASSS) and 123–137 (TTSQ…TTTS). O-linked (GalNAc...) threonine glycosylation is present at Thr-133. Residues 142 to 225 (ESSSPPSTSV…GGMKTTRNPQ (84 aa)) show a composition bias toward polar residues. The segment covering 226 to 273 (TTGTTEVTTTLSASSSDHPTSSPESTPGNTAPRTTETSTTTTTKVLMT) has biased composition (low complexity). Residues 274-305 (SLQQKLPTGSTLGTSTQELTTLPQSQHTGIMK) are compositionally biased toward polar residues. Composition is skewed to low complexity over residues 306–322 (TTSR…TTRT) and 335–349 (TSSQ…TTTS). The span at 373 to 436 (SGDTGHTMAV…GMKTTRNPQR (64 aa)) shows a compositional bias: polar residues. O-linked (GalNAc...) threonine glycans are attached at residues Thr-391 and Thr-392. The span at 437–446 (TTPTEVTTST) shows a compositional bias: low complexity. The segment covering 447–468 (LSASSSDQVQVETTSRATLSPD) has biased composition (polar residues). The segment covering 469 to 492 (TTTTSHAPSVSSSSPSPPSTEGTS) has biased composition (low complexity). Thr-470 is a glycosylation site (O-linked (GalNAc...) threonine). Ser-479 carries O-linked (GalNAc...) serine glycosylation. The segment covering 493-509 (VDTGLTTAVTTQDSTPA) has biased composition (polar residues). Over residues 510-546 (TTQGSLTSSSQTLSTVSPLSTSTQETSTQELTSSQSQ) the composition is skewed to low complexity. A compositionally biased stretch (polar residues) spans 547 to 580 (HTGSMKTTHNPQTTRNTEVTTTLSASSSDQVQVE). Over residues 581 to 594 (TTSQTTLSDATTTS) the composition is skewed to low complexity. Over residues 599-682 (ESSSPPSTSD…GGMKTTRNPQ (84 aa)) the composition is skewed to polar residues. Low complexity-rich tracts occupy residues 683–698 (TTGT…ASSS) and 705–719 (TSSQ…TTTS). Composition is skewed to polar residues over residues 724 to 760 (ESSS…QGSI) and 773 to 807 (QKMS…SSRP). The span at 808–828 (QTTSVTSTLSSSPSGSTPVQT) shows a compositional bias: low complexity. Residues 829 to 868 (RSVTSSSDERTNPTSSGVSNTSPATTEVLTPTSSPESTPG) are compositionally biased toward polar residues. Positions 869-915 (NTAPRTTETSTTTTTKVLMTSLQQKLPTGSTLGTSTPTEVTTTLSAS) are enriched in low complexity. Residues 916–994 (SSDQVQVETT…ISVTPSTQKM (79 aa)) show a composition bias toward polar residues. The segment covering 995-1015 (STVSTLVTSTQELTSSQSQRT) has biased composition (low complexity). A compositionally biased stretch (polar residues) spans 1016-1026 (GSMGTSSKPQA). A compositionally biased stretch (low complexity) spans 1027-1036 (TTPTEVTTST). Positions 1072-1083 (VPSLMHSSKPQA) are enriched in polar residues. Over residues 1084 to 1096 (TTPTEVTTSTLSS) the composition is skewed to low complexity. Over residues 1097–1116 (FSRGSTQTQTVSWETSSSGK) the composition is skewed to polar residues. 3 stretches are compositionally biased toward low complexity: residues 1118–1130 (TAPS…TPSV), 1175–1188 (HRQS…HSQS), and 1233–1267 (SGLT…RSTV). The NIDO domain occupies 1332–1492 (GHSGVMLISL…TGYTGRCGPT (161 aa)). The interval 1574–1597 (GRHRTGLAAGTTSPLSASSTSSGG) is disordered. Low complexity predominate over residues 1580-1597 (LAAGTTSPLSASSTSSGG). The region spanning 1609–1804 (RPAWTFGDPH…HYGMTSETNG (196 aa)) is the VWFD domain. N-linked (GlcNAc...) asparagine glycans are attached at residues Asn-1644, Asn-1660, Asn-1672, Asn-1689, Asn-1698, Asn-1704, Asn-1715, Asn-1724, Asn-1759, Asn-1780, Asn-1787, Asn-1829, Asn-1874, Asn-1926, Asn-1951, Asn-1974, Asn-1981, Asn-2029, and Asn-2048. In terms of domain architecture, EGF-like 1 spans 2047–2086 (QNHSCPVNYCYNHGHCDISGPPDCQPTCTCAPAFTGNRCF). Cystine bridges form between Cys-2051–Cys-2062, Cys-2056–Cys-2074, and Cys-2076–Cys-2085. Residues Asn-2114 and Asn-2121 are each glycosylated (N-linked (GlcNAc...) asparagine). A helical membrane pass occupies residues 2173–2193 (GPLIHYLNNQLISAVMEAFLL). Asn-2227 is a glycosylation site (N-linked (GlcNAc...) asparagine). The EGF-like 2 domain occupies 2256–2295 (VSPCSEGYCHNGGQCKHLPDGPQCTCATFSIYTSWGERCE). Cystine bridges form between Cys-2259–Cys-2270, Cys-2264–Cys-2279, and Cys-2281–Cys-2294. The helical transmembrane segment at 2301–2321 (LGAFFGILFGALGALLLLAIL) threads the bilayer.

As to quaternary structure, a heterodimeric complex, composed of a mucin-4 alpha chain and a cysteine-rich transmembrane mucin-4 beta chain. Mucin-4 beta chain interacts with ERBB2 via the EGF-like domain 1. In nonpolarized cells, associates with ERBB2 and ERBB3. In terms of processing, proteolytically cleaved into 2 subunits, mucin-4 alpha chain and mucin-4 beta chain. Post-translationally, mucin-4 alpha subunit is highly O-glycosylated. Mucin-4 beta subunit is predominantly N-glycosylated. In terms of tissue distribution, expression is developmentally regulated in the mammary gland, dramatically increases in the lactating gland compared with the virgin mammary gland, while decreasing again during mammary gland involution. Expressed in 13762 ascites cells. Overexpressed in some aggressive mammary tumors. Overexpression seems to block cell-cell and cell-matrix interactions to protect tumor cells from immune surveillance, and to promote metastasis.

Its subcellular location is the cell membrane. It is found in the secreted. Its function is as follows. Membrane-bound mucin, a family of highly glycosylated proteins that constitute the major component of the mucus, the slimy and viscous secretion covering epithelial surfaces. These glycoproteins play important roles in the protection of the epithelium and are implicated in epithelial renewal and differentiation. Regulates cellular behavior through both anti-adhesive effects on cell-cell and cell-extracellular matrix interactions and its ability to act as an intramembrane ligand for ERBB2. Plays an important role in proliferation and differentiation of epithelial cells by inducing specific phosphorylation of ERBB2. In polarized epithelial cells, segregates ERBB2 and other ERBB receptors and prevents ERBB2 from acting as a coreceptor. The interaction with ERBB2 leads to enhanced expression of CDKN1B. The formation of a MUC4-ERBB2-ERBB3-NRG1 complex leads to down-regulation of CDKN1B, resulting in repression of apoptosis and stimulation of proliferation. Its ability to promote tumor growth may be mainly due to repression of apoptosis as opposed to proliferation. This chain is Mucin-4 (Muc4), found in Rattus norvegicus (Rat).